Consider the following 601-residue polypeptide: Aspartate--tRNA(Asp/Asn) ligase (601 aa).

Position 174 (Glu174) interacts with L-aspartate. The tract at residues 198–201 is aspartate; that stretch reads QLFK. Arg220 contributes to the L-aspartate binding site. Residues 220-222 and Gln229 each bind ATP; that span reads RDE. L-aspartate is bound at residue His459. Glu493 contributes to the ATP binding site. Arg500 contributes to the L-aspartate binding site. Residue 545–548 coordinates ATP; sequence GLDR.

Belongs to the class-II aminoacyl-tRNA synthetase family. Type 1 subfamily. As to quaternary structure, homodimer.

It localises to the cytoplasm. The enzyme catalyses tRNA(Asx) + L-aspartate + ATP = L-aspartyl-tRNA(Asx) + AMP + diphosphate. In terms of biological role, aspartyl-tRNA synthetase with relaxed tRNA specificity since it is able to aspartylate not only its cognate tRNA(Asp) but also tRNA(Asn). Reaction proceeds in two steps: L-aspartate is first activated by ATP to form Asp-AMP and then transferred to the acceptor end of tRNA(Asp/Asn). The sequence is that of Aspartate--tRNA(Asp/Asn) ligase from Variovorax paradoxus (strain S110).